The sequence spans 351 residues: Probable cobalt-factor III C(17)-methyltransferase (351 aa).

It belongs to the precorrin methyltransferase family.

The enzyme catalyses Co(II)-factor III + S-adenosyl-L-methionine + H(+) = Co(II)-factor IV + S-adenosyl-L-homocysteine. It participates in cofactor biosynthesis; adenosylcobalamin biosynthesis; cob(II)yrinate a,c-diamide from sirohydrochlorin (anaerobic route): step 3/10. Its function is as follows. Methyltransferase that likely catalyzes the ring contraction and methylation of C-17 in cobalt-factor III to form cobalt-factor IV. May also convert cobalt-precorrin-3 to cobalt-precorrin-4. In Methanothermobacter thermautotrophicus (strain ATCC 29096 / DSM 1053 / JCM 10044 / NBRC 100330 / Delta H) (Methanobacterium thermoautotrophicum), this protein is Probable cobalt-factor III C(17)-methyltransferase (cbiH).